The sequence spans 113 residues: Protein PucD (113 aa).

Seems to be required for the LH-II stabilization. This is Protein PucD (pucD) from Rhodobacter capsulatus (Rhodopseudomonas capsulata).